Here is a 980-residue protein sequence, read N- to C-terminus: Envelope glycoprotein B (980 aa).

The segment covering 1–14 (MSSGCRSVGGSTWG) has biased composition (polar residues). 2 disordered regions span residues 1–20 (MSSG…RGDG) and 88–118 (TTPS…TETP). Residues 1–86 (MSSGCRSVGG…LFGSCVVRAV (86 aa)) form the signal peptide. At 87–849 (PTTPSPPTST…SGIASFLNNP (763 aa)) the chain is on the virion surface side. Residues 96-118 (TPTSMSTHSHGTVDPTLLPTETP) show a composition bias toward low complexity. Cystine bridges form between Cys-140–Cys-647, Cys-157–Cys-603, Cys-231–Cys-296, Cys-389–Cys-437, and Cys-668–Cys-708. Asn-165 is a glycosylation site (N-linked (GlcNAc...) asparagine; by host). Residues 197 to 203 (VWKGYSH) are involved in fusion and/or binding to host membrane. Residue Asn-275 is glycosylated (N-linked (GlcNAc...) asparagine; by host). The tract at residues 282-290 (GWMPWRHYT) is involved in fusion and/or binding to host membrane. Residues Asn-380, Asn-423, Asn-497, Asn-514, Asn-515, and Asn-560 are each glycosylated (N-linked (GlcNAc...) asparagine; by host). The span at 505 to 516 (LLNPNANNNNNT) shows a compositional bias: low complexity. The tract at residues 505-535 (LLNPNANNNNNTTRRRRSLLSVPEPQPTQDG) is disordered. 2 N-linked (GlcNAc...) asparagine; by host glycosylation sites follow: Asn-727 and Asn-749. Hydrophobic membrane proximal region stretches follow at residues 794 to 847 (IDSV…SFLN) and 823 to 843 (AVGT…SGIA). The helical transmembrane segment at 850–870 (FGGLAIGLLVIAGLVAAFFAY) threads the bilayer. Over 871 to 980 (RYVMQIRSNP…NDTMENEKMV (110 aa)) the chain is Intravirion. Residues 925-928 (YMSM) carry the Golgi targeting motif. The short motif at 965–968 (YTRL) is the Internalization motif element.

Belongs to the herpesviridae glycoprotein B family. Homotrimer; disulfide-linked. Binds to heparan sulfate proteoglycans. Interacts with gH/gL heterodimer. Post-translationally, a proteolytic cleavage by host furin generates two subunits that remain linked by disulfide bonds.

It is found in the virion membrane. The protein resides in the host cell membrane. It localises to the host endosome membrane. Its subcellular location is the host Golgi apparatus membrane. Functionally, envelope glycoprotein that forms spikes at the surface of virion envelope. Essential for the initial attachment to heparan sulfate moieties of the host cell surface proteoglycans. Involved in fusion of viral and cellular membranes leading to virus entry into the host cell. Following initial binding to its host receptors, membrane fusion is mediated by the fusion machinery composed at least of gB and the heterodimer gH/gL. May be involved in the fusion between the virion envelope and the outer nuclear membrane during virion egress. This is Envelope glycoprotein B from Equine herpesvirus 1 (strain AB1) (EHV-1).